A 284-amino-acid polypeptide reads, in one-letter code: Ribosomal RNA small subunit methyltransferase A (284 aa).

S-adenosyl-L-methionine contacts are provided by asparagine 33, leucine 35, glycine 60, glutamate 81, aspartate 101, and asparagine 124.

This sequence belongs to the class I-like SAM-binding methyltransferase superfamily. rRNA adenine N(6)-methyltransferase family. RsmA subfamily.

The protein localises to the cytoplasm. The enzyme catalyses adenosine(1518)/adenosine(1519) in 16S rRNA + 4 S-adenosyl-L-methionine = N(6)-dimethyladenosine(1518)/N(6)-dimethyladenosine(1519) in 16S rRNA + 4 S-adenosyl-L-homocysteine + 4 H(+). Functionally, specifically dimethylates two adjacent adenosines (A1518 and A1519) in the loop of a conserved hairpin near the 3'-end of 16S rRNA in the 30S particle. May play a critical role in biogenesis of 30S subunits. In Chlamydia felis (strain Fe/C-56) (Chlamydophila felis), this protein is Ribosomal RNA small subunit methyltransferase A.